We begin with the raw amino-acid sequence, 114 residues long: MAKKGFPGMGGAPNMNNMMKQVQKMQKDMEKTQAALEEKEVEASAGGGAITVKVSGKKEVISIEIKPEVVDPEDVEMLQDLIMAAVNEAMRGAEEMVSKEMGKVTGGMNIPGLF.

The interval 23–42 (QKMQKDMEKTQAALEEKEVE) is disordered. The segment covering 25–42 (MQKDMEKTQAALEEKEVE) has biased composition (basic and acidic residues).

The protein belongs to the YbaB/EbfC family. As to quaternary structure, homodimer.

The protein resides in the cytoplasm. It is found in the nucleoid. Binds to DNA and alters its conformation. May be involved in regulation of gene expression, nucleoid organization and DNA protection. The sequence is that of Nucleoid-associated protein Amet_4780 from Alkaliphilus metalliredigens (strain QYMF).